Reading from the N-terminus, the 195-residue chain is Apoptosis-associated speck-like protein containing a CARD (195 aa).

In terms of domain architecture, Pyrin spans 1–91 (MGRARDAILD…AGQLQAATHQ (91 aa)). Residues Lys-55 and Lys-174 each participate in a glycyl lysine isopeptide (Lys-Gly) (interchain with G-Cter in ubiquitin) cross-link. Residues 107 to 195 (AAKPGLHFID…SYLVEDLERS (89 aa)) enclose the CARD domain. Ser-195 carries the phosphoserine modification.

Self-associates; enforced oligomerization induces apoptosis, NF-kappa-B regulation and interleukin-1 beta secretion. Homooligomers can form disk-like particles of approximately 12 nm diameter and approximately 1 nm height. Next to isoform 1, also isoform 2 and isoform 3 may be involved in oligomerization leading to functional regulation. Component of several inflammasomes containing one pattern recognition receptor/sensor, such as NLRP1, NLRP2, NLRP3, NLRP6, NLRC4, AIM2, MEFV or NOD2, and probably NLRC4, NLRP12 or IFI16. Major component of the ASC pyroptosome, a 1-2 um supramolecular assembly (one per macrophage cell) which consists of oligomerized PYCARD dimers and CASP1. Interacts with CASP1 (precursor form); the interaction induces activation of CASP1 leading to the processing of interleukin-1 beta; PYCARD competes with RIPK2 for binding to CASP1. Interacts with NLRP3; the interaction requires the homooligomerization of NLRP3. Interacts with NLRP2, NLRC4, MEFV, CARD16, AIM2, IFI16, NOD2, RIGI, RIPK2, PYDC1, PYDC2, NLRP10, CASP8, CHUK, IKBKB and BAX. Component of the AIM2 PANoptosome complex, a multiprotein complex that drives inflammatory cell death (PANoptosis). In terms of processing, phosphorylated. 'Lys-63'-linked polyubiquitination by TRAF3 is critical for speck formation and inflammasome activation. 'Lys-63'-linked deubiquitinated by USP50; a crucial step for NLRP3-mediated inflammasome activation. 'Lys-63'-linked polyubiquitination by PELI1 is also critical for speck formation and inflammasome activation. Deubiquitinated by USP3 that cleaves 'Lys-48'-linked ubiquitin chains and strengthens its stability by blocking proteasomal degradation. As to expression, widely expressed at low levels. Detected in peripheral blood leukocytes, lung, small intestine, spleen, thymus, colon and at lower levels in placenta, liver and kidney. Very low expression in skeletal muscle, heart and brain. Expressed in lung epithelial cells (at protein level). Detected in the leukemia cell lines HL-60 and U-937, but not in Jurkat T-cell lymphoma and Daudi Burkitt's lymphoma. Detected in the melanoma cell line WM35, but not in WM793. Not detected in HeLa cervical carcinoma cells and MOLT-4 lymphocytic leukemia cells.

The protein localises to the cytoplasm. It localises to the inflammasome. It is found in the endoplasmic reticulum. Its subcellular location is the mitochondrion. The protein resides in the nucleus. The protein localises to the golgi apparatus membrane. Its function is as follows. Functions as a key mediator in apoptosis and inflammation. Promotes caspase-mediated apoptosis involving predominantly caspase-8 and also caspase-9 in a probable cell type-specific manner. Involved in activation of the mitochondrial apoptotic pathway, promotes caspase-8-dependent proteolytic maturation of BID independently of FADD in certain cell types and also mediates mitochondrial translocation of BAX and activates BAX-dependent apoptosis coupled to activation of caspase-9, -2 and -3. Involved in innate immune response by acting as an integral adapter in the assembly of various inflammasomes (NLRP1, NLRP2, NLRP3, NLRP6, AIM2 and probably IFI16) which recruit and activate caspase-1 leading to processing and secretion of pro-inflammatory cytokines. Caspase-1-dependent inflammation leads to macrophage pyroptosis, a form of cell death. The function as activating adapter in different types of inflammasomes is mediated by the pyrin and CARD domains and their homotypic interactions. Clustered PYCARD nucleates the formation of caspase-1 filaments through the interaction of their respective CARD domains, acting as a platform for of caspase-1 polymerization. In the NLRP1 and NLRC4 inflammasomes seems not be required but facilitates the processing of procaspase-1. In cooperation with NOD2 involved in an inflammasome activated by bacterial muramyl dipeptide leading to caspase-1 activation. May be involved in RIGI-triggered pro-inflammatory responses and inflammasome activation. In collaboration with AIM2 which detects cytosolic double-stranded DNA may also be involved in a caspase-1-independent cell death that involves caspase-8. In adaptive immunity may be involved in maturation of dendritic cells to stimulate T-cell immunity and in cytoskeletal rearrangements coupled to chemotaxis and antigen uptake may be involved in post-transcriptional regulation of the guanine nucleotide exchange factor DOCK2; the latter function is proposed to involve the nuclear form. Also involved in transcriptional activation of cytokines and chemokines independent of the inflammasome; this function may involve AP-1, NF-kappa-B, MAPK and caspase-8 signaling pathways. For regulation of NF-kappa-B activating and inhibiting functions have been reported. Modulates NF-kappa-B induction at the level of the IKK complex by inhibiting kinase activity of CHUK and IKBK. Proposed to compete with RIPK2 for association with CASP1 thereby down-regulating CASP1-mediated RIPK2-dependent NF-kappa-B activation and activating interleukin-1 beta processing. Modulates host resistance to DNA virus infection, probably by inducing the cleavage of and inactivating CGAS in presence of cytoplasmic double-stranded DNA. May have a regulating effect on the function as inflammasome adapter. In terms of biological role, seems to inhibit inflammasome-mediated maturation of interleukin-1 beta. The sequence is that of Apoptosis-associated speck-like protein containing a CARD from Homo sapiens (Human).